A 546-amino-acid polypeptide reads, in one-letter code: Glucose-6-phosphate isomerase (546 aa).

Glutamate 352 serves as the catalytic Proton donor. Residues histidine 383 and lysine 511 contribute to the active site.

It belongs to the GPI family.

The protein localises to the cytoplasm. The enzyme catalyses alpha-D-glucose 6-phosphate = beta-D-fructose 6-phosphate. The protein operates within carbohydrate biosynthesis; gluconeogenesis. It functions in the pathway carbohydrate degradation; glycolysis; D-glyceraldehyde 3-phosphate and glycerone phosphate from D-glucose: step 2/4. Catalyzes the reversible isomerization of glucose-6-phosphate to fructose-6-phosphate. The chain is Glucose-6-phosphate isomerase from Paramagnetospirillum magneticum (strain ATCC 700264 / AMB-1) (Magnetospirillum magneticum).